The chain runs to 268 residues: Hydroxyethylthiazole kinase (268 aa).

Met45 contacts substrate. ATP is bound by residues Arg121 and Thr167. Gly194 provides a ligand contact to substrate.

Belongs to the Thz kinase family. It depends on Mg(2+) as a cofactor.

The catalysed reaction is 5-(2-hydroxyethyl)-4-methylthiazole + ATP = 4-methyl-5-(2-phosphooxyethyl)-thiazole + ADP + H(+). Its pathway is cofactor biosynthesis; thiamine diphosphate biosynthesis; 4-methyl-5-(2-phosphoethyl)-thiazole from 5-(2-hydroxyethyl)-4-methylthiazole: step 1/1. In terms of biological role, catalyzes the phosphorylation of the hydroxyl group of 4-methyl-5-beta-hydroxyethylthiazole (THZ). The polypeptide is Hydroxyethylthiazole kinase (Bacillus thuringiensis (strain Al Hakam)).